A 425-amino-acid polypeptide reads, in one-letter code: Glutamyl-tRNA reductase (425 aa).

Substrate contacts are provided by residues 49 to 52, Ser106, 111 to 113, and Gln117; these read TCNR and EPQ. The active-site Nucleophile is the Cys50. 186–191 contributes to the NADP(+) binding site; sequence GAGETI.

It belongs to the glutamyl-tRNA reductase family. In terms of assembly, homodimer.

It carries out the reaction (S)-4-amino-5-oxopentanoate + tRNA(Glu) + NADP(+) = L-glutamyl-tRNA(Glu) + NADPH + H(+). It functions in the pathway porphyrin-containing compound metabolism; protoporphyrin-IX biosynthesis; 5-aminolevulinate from L-glutamyl-tRNA(Glu): step 1/2. Functionally, catalyzes the NADPH-dependent reduction of glutamyl-tRNA(Glu) to glutamate 1-semialdehyde (GSA). The chain is Glutamyl-tRNA reductase from Saccharophagus degradans (strain 2-40 / ATCC 43961 / DSM 17024).